A 172-amino-acid chain; its full sequence is Bifunctional protein PyrR (172 aa).

The PRPP-binding motif lies at 90–102 (LVLVDDVLMSGRT).

This sequence belongs to the purine/pyrimidine phosphoribosyltransferase family. PyrR subfamily.

The enzyme catalyses UMP + diphosphate = 5-phospho-alpha-D-ribose 1-diphosphate + uracil. In terms of biological role, regulates the transcription of the pyrimidine nucleotide (pyr) operon in response to exogenous pyrimidines. Functionally, also displays a weak uracil phosphoribosyltransferase activity which is not physiologically significant. The polypeptide is Bifunctional protein PyrR (Pseudomonas entomophila (strain L48)).